Here is a 170-residue protein sequence, read N- to C-terminus: uncharacterized protein (170 aa).

At methionine 1–serine 15 the chain is on the cytoplasmic side. A helical transmembrane segment spans residues leucine 16–alanine 36. Topologically, residues serine 37–serine 76 are extracellular. Residues leucine 77–serine 97 traverse the membrane as a helical segment. The Cytoplasmic segment spans residues arginine 98–alanine 119. Residues valine 120 to leucine 140 form a helical membrane-spanning segment. Topologically, residues proline 141–leucine 170 are extracellular.

The protein resides in the membrane. This is an uncharacterized protein from Saccharomyces cerevisiae (strain ATCC 204508 / S288c) (Baker's yeast).